The sequence spans 89 residues: MKTLFLIITSFILLEVEGIKNGYPRDSKGCTFECGQDAKHGDDYCDKMCKTTLKGEGGDCDFEYAECWCDNIPDTVVTWKNKEPKCKQI.

The first 18 residues, 1–18 (MKTLFLIITSFILLEVEG), serve as a signal peptide directing secretion. Residues 20–87 (KNGYPRDSKG…TWKNKEPKCK (68 aa)) form the LCN-type CS-alpha/beta domain. Disulfide bonds link C30/C86, C34/C60, C45/C67, and C49/C69.

The protein belongs to the long (4 C-C) scorpion toxin superfamily. Sodium channel inhibitor family. In terms of tissue distribution, expressed by the venom gland.

Its subcellular location is the secreted. In terms of biological role, inhibits voltage-gated sodium channels (Nav). The chain is Sodium channel toxin To13 from Tityus obscurus (Amazonian scorpion).